Reading from the N-terminus, the 431-residue chain is Adenylosuccinate synthetase (431 aa).

Residues 13–19 (GDEGKGK) and 41–43 (GHT) contribute to the GTP site. Catalysis depends on Asp-14, which acts as the Proton acceptor. Residues Asp-14 and Gly-41 each coordinate Mg(2+). IMP-binding positions include 14 to 17 (DEGK), 39 to 42 (NAGH), Thr-130, Arg-144, Gln-225, Thr-240, and Arg-304. Catalysis depends on His-42, which acts as the Proton donor. 300–306 (ATTGRER) contributes to the substrate binding site. GTP contacts are provided by residues Arg-306, 332–334 (KLD), and 415–417 (STG).

It belongs to the adenylosuccinate synthetase family. As to quaternary structure, homodimer. The cofactor is Mg(2+).

The protein localises to the cytoplasm. The enzyme catalyses IMP + L-aspartate + GTP = N(6)-(1,2-dicarboxyethyl)-AMP + GDP + phosphate + 2 H(+). Its pathway is purine metabolism; AMP biosynthesis via de novo pathway; AMP from IMP: step 1/2. Plays an important role in the de novo pathway of purine nucleotide biosynthesis. Catalyzes the first committed step in the biosynthesis of AMP from IMP. This Colwellia psychrerythraea (strain 34H / ATCC BAA-681) (Vibrio psychroerythus) protein is Adenylosuccinate synthetase.